The primary structure comprises 405 residues: Cytoplasmic tRNA 2-thiolation protein 2 (405 aa).

It belongs to the CTU2/NCS2 family.

The protein localises to the cytoplasm. Its pathway is tRNA modification; 5-methoxycarbonylmethyl-2-thiouridine-tRNA biosynthesis. Functionally, plays a central role in 2-thiolation of mcm(5)S(2)U at tRNA wobble positions of tRNA(Lys), tRNA(Glu) and tRNA(Gln). May act by forming a heterodimer with NCS6/CTU1 that ligates sulfur from thiocarboxylated URM1 onto the uridine of tRNAs at wobble position. The chain is Cytoplasmic tRNA 2-thiolation protein 2 from Drosophila pseudoobscura pseudoobscura (Fruit fly).